Reading from the N-terminus, the 250-residue chain is 3-deoxy-manno-octulosonate cytidylyltransferase (250 aa).

This sequence belongs to the KdsB family.

It is found in the cytoplasm. It catalyses the reaction 3-deoxy-alpha-D-manno-oct-2-ulosonate + CTP = CMP-3-deoxy-beta-D-manno-octulosonate + diphosphate. The protein operates within nucleotide-sugar biosynthesis; CMP-3-deoxy-D-manno-octulosonate biosynthesis; CMP-3-deoxy-D-manno-octulosonate from 3-deoxy-D-manno-octulosonate and CTP: step 1/1. It participates in bacterial outer membrane biogenesis; lipopolysaccharide biosynthesis. In terms of biological role, activates KDO (a required 8-carbon sugar) for incorporation into bacterial lipopolysaccharide in Gram-negative bacteria. The sequence is that of 3-deoxy-manno-octulosonate cytidylyltransferase from Bacteroides thetaiotaomicron (strain ATCC 29148 / DSM 2079 / JCM 5827 / CCUG 10774 / NCTC 10582 / VPI-5482 / E50).